The following is a 282-amino-acid chain: 5'-adenylylsulfate reductase-like 2 (282 aa).

The N-terminal stretch at 1 to 19 (MRWWPALPLLLLAVAVAGA) is a signal peptide. Residues 20–159 (GDAAPVCTRP…LAAFYNDVSG (140 aa)) form the Thioredoxin domain. Asparagine 134 is a glycosylation site (N-linked (GlcNAc...) asparagine). Residues 205 to 225 (AASFVILRLLYLFYPKITAFV) traverse the membrane as a helical segment.

It is found in the membrane. The polypeptide is 5'-adenylylsulfate reductase-like 2 (APRL2) (Oryza sativa subsp. japonica (Rice)).